A 359-amino-acid polypeptide reads, in one-letter code: Type-1 angiotensin II receptor (359 aa).

The Extracellular portion of the chain corresponds to methionine 1–serine 25. Residue asparagine 4 is glycosylated (N-linked (GlcNAc...) asparagine). Aspartate 17 serves as a coordination point for angiotensin II. Intrachain disulfides connect cysteine 18–cysteine 274 and cysteine 101–cysteine 180. Residues tyrosine 26–cysteine 55 traverse the membrane as a helical segment. Residues tyrosine 56–threonine 61 lie on the Cytoplasmic side of the membrane. A helical membrane pass occupies residues valine 62–alanine 89. Residues methionine 90–asparagine 98 are Extracellular-facing. The chain crosses the membrane as a helical span at residues cysteine 99–aspartate 125. Residues arginine 126–threonine 141 lie on the Cytoplasmic side of the membrane. The chain crosses the membrane as a helical span at residues methionine 142–isoleucine 165. Residues histidine 166 to threonine 190 lie on the Extracellular side of the membrane. Arginine 167 is an angiotensin II binding site. N-linked (GlcNAc...) asparagine glycosylation occurs at asparagine 176. Phenylalanine 182 and tyrosine 184 together coordinate angiotensin II. Residues asparagine 187 and asparagine 188 are each glycosylated (N-linked (GlcNAc...) asparagine). The chain crosses the membrane as a helical span at residues leucine 191–threonine 216. An angiotensin II-binding site is contributed by lysine 199. The Cytoplasmic segment spans residues leucine 217–phenylalanine 239. The chain crosses the membrane as a helical span at residues lysine 240–leucine 268. Residues histidine 269–aspartate 278 lie on the Extracellular side of the membrane. Residues isoleucine 279–phenylalanine 304 form a helical membrane-spanning segment. Residues phenylalanine 305–glutamate 359 lie on the Cytoplasmic side of the membrane.

This sequence belongs to the G-protein coupled receptor 1 family. C-terminal Ser or Thr residues may be phosphorylated. As to expression, adrenal medulla.

Its subcellular location is the cell membrane. Functionally, receptor for angiotensin II, a vasoconstricting peptide, which acts as a key regulator of blood pressure and sodium retention by the kidney. The activated receptor in turn couples to G-alpha proteins G(q) (GNAQ, GNA11, GNA14 or GNA15) and thus activates phospholipase C and increases the cytosolic Ca(2+) concentrations, which in turn triggers cellular responses such as stimulation of protein kinase C. The chain is Type-1 angiotensin II receptor (AGTR1) from Meleagris gallopavo (Wild turkey).